We begin with the raw amino-acid sequence, 478 residues long: Aspartyl/glutamyl-tRNA(Asn/Gln) amidotransferase subunit B (478 aa).

It belongs to the GatB/GatE family. GatB subfamily. As to quaternary structure, heterotrimer of A, B and C subunits.

It carries out the reaction L-glutamyl-tRNA(Gln) + L-glutamine + ATP + H2O = L-glutaminyl-tRNA(Gln) + L-glutamate + ADP + phosphate + H(+). The catalysed reaction is L-aspartyl-tRNA(Asn) + L-glutamine + ATP + H2O = L-asparaginyl-tRNA(Asn) + L-glutamate + ADP + phosphate + 2 H(+). Allows the formation of correctly charged Asn-tRNA(Asn) or Gln-tRNA(Gln) through the transamidation of misacylated Asp-tRNA(Asn) or Glu-tRNA(Gln) in organisms which lack either or both of asparaginyl-tRNA or glutaminyl-tRNA synthetases. The reaction takes place in the presence of glutamine and ATP through an activated phospho-Asp-tRNA(Asn) or phospho-Glu-tRNA(Gln). This Alkalilimnicola ehrlichii (strain ATCC BAA-1101 / DSM 17681 / MLHE-1) protein is Aspartyl/glutamyl-tRNA(Asn/Gln) amidotransferase subunit B.